The sequence spans 492 residues: Gamma-aminobutyric acid receptor subunit alpha-3 (492 aa).

Residues 1 to 28 (MIITQTSHCYMTSLGILFLINILPGTTG) form the signal peptide. The segment at 28 to 54 (GQGESRRQEPGDFVKQDIGGLSPKHAP) is disordered. The Extracellular portion of the chain corresponds to 29–274 (QGESRRQEPG…MTTHFHLKRK (246 aa)). Over residues 31 to 42 (ESRRQEPGDFVK) the composition is skewed to basic and acidic residues. N-linked (GlcNAc...) asparagine glycosylation occurs at asparagine 63. Residue arginine 119 coordinates 4-aminobutanoate. N-linked (GlcNAc...) asparagine glycosylation is found at asparagine 163 and asparagine 176. Threonine 182 provides a ligand contact to 4-aminobutanoate. Residues cysteine 191 and cysteine 205 are joined by a disulfide bond. Asparagine 228 is a glycosylation site (N-linked (GlcNAc...) asparagine). The chain crosses the membrane as a helical span at residues 275–295 (IGYFVIQTYLPCIMTVILSQV). Over 296-305 (SFWLNRESVP) the chain is Cytoplasmic. A helical membrane pass occupies residues 306–325 (ARTVFGVTTVLTMTTLSISA). At 326 to 336 (RNSLPKVAYAT) the chain is on the extracellular side. A helical transmembrane segment spans residues 337-357 (AMDWFIAVCYAFVFSALIEFA). The Cytoplasmic portion of the chain corresponds to 358–457 (TVNYFTKRSW…TYNSVSKVDK (100 aa)). Serine 426 carries the post-translational modification Phosphoserine. Threonine 427 bears the Phosphothreonine mark. Serine 433 and serine 442 each carry phosphoserine. A helical membrane pass occupies residues 458–478 (ISRIIFPVLFAIFNLVYWATY). The Extracellular segment spans residues 479-492 (VNRESAIKGMIRKQ).

It belongs to the ligand-gated ion channel (TC 1.A.9) family. Gamma-aminobutyric acid receptor (TC 1.A.9.5) subfamily. GABRA3 sub-subfamily. As to quaternary structure, heteropentamer, formed by a combination of alpha (GABRA1-6), beta (GABRB1-3), gamma (GABRG1-3), delta (GABRD), epsilon (GABRE), rho (GABRR1-3), pi (GABRP) and theta (GABRQ) chains, each subunit exhibiting distinct physiological and pharmacological properties. Binds UBQLN1. Interacts with GPHN.

It localises to the postsynaptic cell membrane. The protein localises to the cell membrane. It carries out the reaction chloride(in) = chloride(out). Its activity is regulated as follows. Potentiated by etomidate, propofol, pregnanolone and flurazepam. Its function is as follows. Alpha subunit of the heteropentameric ligand-gated chloride channel gated by gamma-aminobutyric acid (GABA), a major inhibitory neurotransmitter in the brain. GABA-gated chloride channels, also named GABA(A) receptors (GABAAR), consist of five subunits arranged around a central pore and contain GABA active binding site(s) located at the alpha and beta subunit interface(s). When activated by GABA, GABAARs selectively allow the flow of chloride anions across the cell membrane down their electrochemical gradient. Chloride influx into the postsynaptic neuron following GABAAR opening decreases the neuron ability to generate a new action potential, thereby reducing nerve transmission. This chain is Gamma-aminobutyric acid receptor subunit alpha-3, found in Homo sapiens (Human).